A 310-amino-acid chain; its full sequence is Carbamate kinase 1 (310 aa).

This sequence belongs to the carbamate kinase family.

It localises to the cytoplasm. The enzyme catalyses hydrogencarbonate + NH4(+) + ATP = carbamoyl phosphate + ADP + H2O + H(+). It functions in the pathway metabolic intermediate metabolism; carbamoyl phosphate degradation; CO(2) and NH(3) from carbamoyl phosphate: step 1/1. This is Carbamate kinase 1 (arcC1) from Staphylococcus epidermidis (strain ATCC 12228 / FDA PCI 1200).